The sequence spans 150 residues: Sulfur-rich protein, serovar D (150 aa).

2 consecutive transmembrane segments (helical) span residues 41-61 and 67-87; these read VGLV…LVSA and AIYL…VGIL.

It localises to the membrane. In Chlamydia trachomatis serovar D (strain ATCC VR-885 / DSM 19411 / UW-3/Cx), this protein is Sulfur-rich protein, serovar D (srp).